We begin with the raw amino-acid sequence, 843 residues long: Protein P (843 aa).

The segment at 1 to 177 (MPLSYQHFRK…FCGSPYSWEQ (177 aa)) is terminal protein domain (TP). The tract at residues 178 to 346 (ELQHGRLVFQ…YCLSHIVNLL (169 aa)) is spacer. A polymerase/reverse transcriptase domain (RT) region spans residues 347 to 690 (EDWGPCTEHG…YMNLYPVARQ (344 aa)). A Reverse transcriptase domain is found at 357–600 (EHHIRIPRTP…YSLNFMGYVI (244 aa)). Residues Asp429, Asp551, and Asp552 each coordinate Mg(2+).

This sequence belongs to the hepadnaviridae P protein family.

The catalysed reaction is DNA(n) + a 2'-deoxyribonucleoside 5'-triphosphate = DNA(n+1) + diphosphate. It carries out the reaction Endonucleolytic cleavage to 5'-phosphomonoester.. With respect to regulation, activated by host HSP70 and HSP40 in vitro to be able to bind the epsilon loop of the pgRNA. Because deletion of the RNase H region renders the protein partly chaperone-independent, the chaperones may be needed indirectly to relieve occlusion of the RNA-binding site by this domain. Inhibited by several reverse-transcriptase inhibitors: Lamivudine, Adefovir and Entecavir. Its function is as follows. Multifunctional enzyme that converts the viral RNA genome into dsDNA in viral cytoplasmic capsids. This enzyme displays a DNA polymerase activity that can copy either DNA or RNA templates, and a ribonuclease H (RNase H) activity that cleaves the RNA strand of RNA-DNA heteroduplexes in a partially processive 3'- to 5'-endonucleasic mode. Neo-synthesized pregenomic RNA (pgRNA) are encapsidated together with the P protein, and reverse-transcribed inside the nucleocapsid. Initiation of reverse-transcription occurs first by binding the epsilon loop on the pgRNA genome, and is initiated by protein priming, thereby the 5'-end of (-)DNA is covalently linked to P protein. Partial (+)DNA is synthesized from the (-)DNA template and generates the relaxed circular DNA (RC-DNA) genome. After budding and infection, the RC-DNA migrates in the nucleus, and is converted into a plasmid-like covalently closed circular DNA (cccDNA). The activity of P protein does not seem to be necessary for cccDNA generation, and is presumably released from (+)DNA by host nuclear DNA repair machinery. This Homo sapiens (Human) protein is Protein P.